The primary structure comprises 159 residues: Putative polyketide cyclase (159 aa).

It to polyketide cyclases.

Involved in developmentally regulated synthesis of a compound biosynthetically related to polyketide antibiotics which is essential for spore color in Streptomyces coelicolor. The chain is Putative polyketide cyclase from Streptomyces coelicolor (strain ATCC BAA-471 / A3(2) / M145).